Reading from the N-terminus, the 846-residue chain is Homeodomain-interacting protein kinase 1 (846 aa).

The segment at 47–74 is disordered; sequence NPFSIQKAPGTSSDNEQRAPKRRADEEA. Basic and acidic residues predominate over residues 61 to 72; that stretch reads NEQRAPKRRADE. Residues 147–483 enclose the Protein kinase domain; the sequence is YEVLEFLGKG…PAEGLESKFV (337 aa). ATP is bound by residues 153–161 and lysine 176; that span reads LGKGTFGQV. Aspartate 272 acts as the Proton acceptor in catalysis. The interval 741–790 is disordered; that stretch reads LAAQPKKNSPAPSVITLSSDEDSNGAGSSNSGSTTRTGAVNPVRNDTLPM. Over residues 746–757 the composition is skewed to polar residues; that stretch reads KKNSPAPSVITL. A compositionally biased stretch (low complexity) spans 764–773; the sequence is NGAGSSNSGS.

Belongs to the protein kinase superfamily. CMGC Ser/Thr protein kinase family. HIPK subfamily. In terms of tissue distribution, broadly expressed during embryogenesis. Expression becomes more restricted during larval development. L3 larvae display robust expression in many head and motor neurons, and lower levels of expression in the intestine and the seam cells of the hypodermis. By late L4 stage, expression is largely restricted to neurons and is maintained in nerve cells of the head and nerve cord during adulthood. Expressed in adult pharyngeal cells, hypodermal cells, gonadal sheath cells and distal tip cells but not in germline cells. Expressed in serotonergic neurons such as ADF and NSM and in GABAergic neurons, including RME, RIS and DVB.

It localises to the nucleus. The enzyme catalyses L-seryl-[protein] + ATP = O-phospho-L-seryl-[protein] + ADP + H(+). It carries out the reaction L-threonyl-[protein] + ATP = O-phospho-L-threonyl-[protein] + ADP + H(+). Serine/threonine-protein kinase required in the somatic gonadal cells to regulate germline proliferation during larval development and in adulthood. Plays a role in the development/differentiation of gonadal distal tip cells. Required for normal lifespan in a pha-4 and mxl-2-dependent manner. Also contributes to survival following heat or oxidative stress. Prevents sumoylation and inactivation of heat shock transcription factor hsf-1 which enhances hsf-1-dependent transcriptional induction of chaperones in response to heat shock. Also required for hormetic extension of longevity in response to heat stress. Also contributes to longevity by promoting autophagy under nutrient stress conditions through induction of autophagosome formation and autophagy gene expression. Provides protection against proteotoxic polyglutamine aggregate and the associated locomotory toxicity, probably as a result of kinase activity. Contributes to longevity via gamma-aminobutyric acid (GABA)ergic signaling by promoting autophagy through mxl-2, hlh-30 and daf-16 but independent of hsf-1 and phas-4, to induce autophagosome formation and the expression of autophagy genes. Promotes thermotolerance via serotonergic signaling by serotonergic neurons. Preserves neuronal function in aging animals by mitigating against age-associated decline in axonal and synaptic transmissions. Acts as an activator of nhr-49-dependent hypoxia response, including the up-regulation of fmo-2 and acs-2, the induction of autophagosome formation and expression of autophagy genes. The sequence is that of Homeodomain-interacting protein kinase 1 from Caenorhabditis elegans.